The following is a 70-amino-acid chain: MIVALLYLILAGAYLLVIPIAVLFYLKQRWYVASSIERLLMYFLVFFFFPGLLVLSPFANFRPQRRQVQV.

Transmembrane regions (helical) follow at residues 2–22 (IVAL…PIAV) and 39–59 (LLMY…SPFA).

The protein belongs to the complex I NdhL subunit family. As to quaternary structure, NDH-1 can be composed of about 15 different subunits; different subcomplexes with different compositions have been identified which probably have different functions.

The protein resides in the cellular thylakoid membrane. The enzyme catalyses a plastoquinone + NADH + (n+1) H(+)(in) = a plastoquinol + NAD(+) + n H(+)(out). The catalysed reaction is a plastoquinone + NADPH + (n+1) H(+)(in) = a plastoquinol + NADP(+) + n H(+)(out). Functionally, NDH-1 shuttles electrons from an unknown electron donor, via FMN and iron-sulfur (Fe-S) centers, to quinones in the respiratory and/or the photosynthetic chain. The immediate electron acceptor for the enzyme in this species is believed to be plastoquinone. Couples the redox reaction to proton translocation, and thus conserves the redox energy in a proton gradient. Cyanobacterial NDH-1 also plays a role in inorganic carbon-concentration. The polypeptide is NAD(P)H-quinone oxidoreductase subunit L (Nostoc punctiforme (strain ATCC 29133 / PCC 73102)).